Here is a 922-residue protein sequence, read N- to C-terminus: Probable outer membrane protein pmp1 (922 aa).

The N-terminal stretch at 1 to 26 (MRFSLCGFPLVFSFTLLSVFDTSLSA) is a signal peptide. In terms of domain architecture, Autotransporter spans 620 to 922 (SLQTDRGLWI…NINCGSKFRF (303 aa)).

The protein belongs to the PMP outer membrane protein family.

It is found in the secreted. The protein localises to the cell wall. Its subcellular location is the cell outer membrane. In Chlamydia pneumoniae (Chlamydophila pneumoniae), this protein is Probable outer membrane protein pmp1 (pmp1).